Consider the following 904-residue polypeptide: E3 ubiquitin-protein ligase ZNF598 (904 aa).

An RING-type zinc finger spans residues 29–69; that stretch reads CVLCCGDLEATALGRCDHPVCYRCSTKMRVLCEQRYCAVCR. The segment at 187-210 adopts a C2H2-type zinc-finger fold; that stretch reads PLCKFCDERYLDNDELLKHLRRDH. Tyr-306 is modified (phosphotyrosine). Disordered stretches follow at residues 312–469 and 490–656; these read YSRQ…GLAL and VSSV…LPRP. Residues 346–358 are compositionally biased toward low complexity; the sequence is AAAVRASVAAQQQ. The span at 359-388 shows a compositional bias: basic and acidic residues; that stretch reads EEARRSEDQEEGGRPKKEEAAARGPEDPRG. The segment covering 404 to 416 has biased composition (polar residues); the sequence is ETSTNGPVSQEAF. Low complexity predominate over residues 418–431; sequence VTGPAAPGCVGVPG. Phosphoserine occurs at positions 428, 431, and 437. Composition is skewed to low complexity over residues 447 to 461 and 502 to 513; these read SLSA…TAAT and SLVSAWNSSSSS. Over residues 521–531 the composition is skewed to polar residues; sequence LSAQATGSGQP. The segment covering 534–543 has biased composition (basic residues); sequence KAGKGSRGGR. The segment covering 564 to 584 has biased composition (polar residues); sequence LLSTRPTGSVSSTLGLASIQP.

The protein belongs to the ZNF598/HEL2 family. Interacts with the E2 ubiquitin-conjugating enzyme UBE2D3. Component of the 4EHP-GYF2 complex, at least composed of EIF4E2, GIGYF2 and ZNF598.

It is found in the cytoplasm. The protein resides in the cytosol. It catalyses the reaction S-ubiquitinyl-[E2 ubiquitin-conjugating enzyme]-L-cysteine + [acceptor protein]-L-lysine = [E2 ubiquitin-conjugating enzyme]-L-cysteine + N(6)-ubiquitinyl-[acceptor protein]-L-lysine.. Its pathway is protein modification; protein ubiquitination. Functionally, E3 ubiquitin-protein ligase that plays a key role in the ribosome quality control (RQC), a pathway that takes place when a ribosome has stalled during translation, leading to degradation of nascent peptide chains. ZNF598 is activated when ribosomes are stalled within an mRNA following translation of prematurely polyadenylated mRNAs. Acts as a ribosome collision sensor: specifically recognizes and binds collided di-ribosome, which arises when a trailing ribosome encounters a slower leading ribosome, leading to terminally arrest translation. Following binding to colliding ribosomes, mediates monoubiquitination of 40S ribosomal proteins RPS10/eS10 and RPS3/uS3, and 'Lys-63'-linked polyubiquitination of RPS20/uS10. Polyubiquitination of RPS20/uS10 promotes recruitment of the RQT (ribosome quality control trigger) complex, which drives the disassembly of stalled ribosomes, followed by degradation of nascent peptides. E3 ubiquitin-protein ligase activity is dependent on the E2 ubiquitin-conjugating enzyme UBE2D3. Also acts as an adapter that recruits the 4EHP-GYF2 complex to mRNAs. Independently of its role in RQC, may also act as a negative regulator of interferon-stimulated gene (ISG) expression. (Microbial infection) Required for poxvirus protein synthesis by mediating ubiquitination of RPS10/eS10 and RPS20/uS10. Poxvirus encoding mRNAs contain unusual 5' poly(A) leaders and ZNF598 is required for their translational efficiency, possibly via its ability to suppress readthrough or sliding on shorter poly(A) tracts. This is E3 ubiquitin-protein ligase ZNF598 from Homo sapiens (Human).